Consider the following 285-residue polypeptide: MATSISARLIYYAKLSKPRIIWLLDLAALSGAFLSGKLMPLSILAVLVGGTFASAGSMIINEGIEIDKDKVMKRTSKRPTVMGYVSQKEAIYVGIALLTLGTLVGLLDNPLTSFFILLGGLVYVLVYTVWLKPRSPLNIVIGGLAGSAAAWAGYASTTSSFTIPSILLGLLIFMWTPGHFWALALKFKEDYSRAGIPMLPVIMPENFSAKMIALSNALMIPFALALYLYAGVIYGIVAGILSAVQMYFSVRLMRNPTGEEAWRSFKFSSPYLAILLILIILTRLI.

Helical transmembrane passes span 19 to 39, 40 to 60, 90 to 110, 111 to 131, 135 to 155, 165 to 185, 220 to 240, and 265 to 285; these read RIIW…GKLM, PLSI…SMII, AIYV…LDNP, LTSF…TVWL, SPLN…AGYA, SILL…ALAL, IPFA…VAGI, and FKFS…TRLI.

Belongs to the UbiA prenyltransferase family. Protoheme IX farnesyltransferase subfamily.

It localises to the cell membrane. The enzyme catalyses heme b + (2E,6E)-farnesyl diphosphate + H2O = Fe(II)-heme o + diphosphate. Its pathway is porphyrin-containing compound metabolism; heme O biosynthesis; heme O from protoheme: step 1/1. Functionally, converts heme B (protoheme IX) to heme O by substitution of the vinyl group on carbon 2 of heme B porphyrin ring with a hydroxyethyl farnesyl side group. The protein is Protoheme IX farnesyltransferase of Metallosphaera sedula (strain ATCC 51363 / DSM 5348 / JCM 9185 / NBRC 15509 / TH2).